The following is a 351-amino-acid chain: Anthranilate phosphoribosyltransferase (351 aa).

5-phospho-alpha-D-ribose 1-diphosphate is bound by residues G84, G87–D88, N95–S98, K113–S121, and A125. G84 provides a ligand contact to anthranilate. S97 contacts Mg(2+). N116 serves as a coordination point for anthranilate. Residue R171 participates in anthranilate binding. Positions 229 and 230 each coordinate Mg(2+).

The protein belongs to the anthranilate phosphoribosyltransferase family. In terms of assembly, homodimer. Mg(2+) serves as cofactor.

The catalysed reaction is N-(5-phospho-beta-D-ribosyl)anthranilate + diphosphate = 5-phospho-alpha-D-ribose 1-diphosphate + anthranilate. It functions in the pathway amino-acid biosynthesis; L-tryptophan biosynthesis; L-tryptophan from chorismate: step 2/5. Catalyzes the transfer of the phosphoribosyl group of 5-phosphorylribose-1-pyrophosphate (PRPP) to anthranilate to yield N-(5'-phosphoribosyl)-anthranilate (PRA). The chain is Anthranilate phosphoribosyltransferase from Clavibacter sepedonicus (Clavibacter michiganensis subsp. sepedonicus).